We begin with the raw amino-acid sequence, 198 residues long: FMN-dependent NADH:quinone oxidoreductase (198 aa).

FMN contacts are provided by residues serine 10, 16-18 (SQS), 94-97 (MYNF), and 138-141 (TRGG).

This sequence belongs to the azoreductase type 1 family. As to quaternary structure, homodimer. Requires FMN as cofactor.

It catalyses the reaction 2 a quinone + NADH + H(+) = 2 a 1,4-benzosemiquinone + NAD(+). It carries out the reaction N,N-dimethyl-1,4-phenylenediamine + anthranilate + 2 NAD(+) = 2-(4-dimethylaminophenyl)diazenylbenzoate + 2 NADH + 2 H(+). Functionally, quinone reductase that provides resistance to thiol-specific stress caused by electrophilic quinones. Also exhibits azoreductase activity. Catalyzes the reductive cleavage of the azo bond in aromatic azo compounds to the corresponding amines. This chain is FMN-dependent NADH:quinone oxidoreductase, found in Shewanella baltica (strain OS223).